Reading from the N-terminus, the 593-residue chain is Capsid protein 1 (593 aa).

This sequence belongs to the NCLDV major capsid protein family.

Its subcellular location is the virion. This chain is Capsid protein 1, found in Acanthamoeba polyphaga mimivirus (APMV).